The following is a 211-amino-acid chain: tRNA (pseudouridine(54)-N(1))-methyltransferase (211 aa).

Residues Leu128, Gly150, and Cys183 each coordinate S-adenosyl-L-methionine.

This sequence belongs to the methyltransferase superfamily. TrmY family. In terms of assembly, homodimer.

The protein resides in the cytoplasm. The enzyme catalyses pseudouridine(54) in tRNA + S-adenosyl-L-methionine = N(1)-methylpseudouridine(54) in tRNA + S-adenosyl-L-homocysteine + H(+). In terms of biological role, specifically catalyzes the N1-methylation of pseudouridine at position 54 (Psi54) in tRNAs. The polypeptide is tRNA (pseudouridine(54)-N(1))-methyltransferase (Methanosarcina acetivorans (strain ATCC 35395 / DSM 2834 / JCM 12185 / C2A)).